We begin with the raw amino-acid sequence, 671 residues long: Leucine aminopeptidase 2 (671 aa).

Substrate-binding positions include 184 to 186 (QLE) and 311 to 316 (PYGGME). H340 contributes to the Zn(2+) binding site. Catalysis depends on E341, which acts as the Proton acceptor. The Zn(2+) site is built by H344 and E363. The Proton donor role is filled by Y429.

It belongs to the peptidase M1 family. Zn(2+) serves as cofactor.

Its subcellular location is the cytoplasm. The protein localises to the nucleus. It catalyses the reaction an epoxide + H2O = an ethanediol. Inhibited by 3-(4-benzyloxyphenyl)-2-(R)-amino-1-propanethiol (thioamine) and N-hydroxy-N-(2-(S)-amino-3-(4-benzyloxyphenyl)propyl)-5-carboxypen-tanamide (hydroxamic acid). The aminopeptidase activity is stimulated by LTA(4). Aminopeptidase that preferentially cleaves di- and tripeptides. Also has low epoxide hydrolase activity (in vitro). Can hydrolyze the epoxide leukotriene LTA(4) but it forms preferentially 5,6-dihydroxy-7,9,11,14-eicosatetraenoic acid rather than the cytokine leukotriene B(4) as the product compared to the homologous mammalian enzyme (in vitro). This chain is Leucine aminopeptidase 2, found in Saccharomyces cerevisiae (strain YJM789) (Baker's yeast).